The following is an 806-amino-acid chain: Zygotic DNA replication licensing factor mcm3 (806 aa).

In terms of domain architecture, MCM spans 295–502 (VFEQLSRSLA…HDREISDHVL (208 aa)). 345-352 (GDPSVAKS) lines the ATP pocket. The Arginine finger signature appears at 477–480 (SRFD). The interval 662-738 (KKRRRREGES…TDSSAKPGLS (77 aa)) is disordered. Positions 693–702 (AQDGESHDPY) are enriched in basic and acidic residues.

Belongs to the MCM family. In terms of assembly, component of the mcm2-7 complex (RLF-M). The complex forms a toroidal hexameric ring with the proposed subunit order mcm2-mcm6-mcm4-mcm7-mcm3-mcm5. Begins to associate with zmcm6 into mcm complexes at the neurula stage. Component of the CMG helicase complex, composed of the mcm2-7 complex, the GINS complex and cdc45.

Its subcellular location is the nucleus. The protein localises to the chromosome. The enzyme catalyses ATP + H2O = ADP + phosphate + H(+). Functionally, acts as a component of the mcm2-7 complex (mcm complex) which is the putative replicative helicase essential for 'once per cell cycle' DNA replication initiation and elongation in eukaryotic cells. The active ATPase sites in the mcm2-7 ring are formed through the interaction surfaces of two neighboring subunits such that a critical structure of a conserved arginine finger motif is provided in trans relative to the ATP-binding site of the Walker A box of the adjacent subunit. The six ATPase active sites, however, are likely to contribute differentially to the complex helicase activity. The existence of maternal and zygotic forms of mcm3 and mcm6 suggests that specific forms of mcm2-7 complexes may be used during different stages of development. This is Zygotic DNA replication licensing factor mcm3 from Xenopus laevis (African clawed frog).